We begin with the raw amino-acid sequence, 193 residues long: Adenine phosphoribosyltransferase (193 aa).

It belongs to the purine/pyrimidine phosphoribosyltransferase family. As to quaternary structure, homodimer.

The protein localises to the cytoplasm. The enzyme catalyses AMP + diphosphate = 5-phospho-alpha-D-ribose 1-diphosphate + adenine. It functions in the pathway purine metabolism; AMP biosynthesis via salvage pathway; AMP from adenine: step 1/1. Functionally, catalyzes a salvage reaction resulting in the formation of AMP, that is energically less costly than de novo synthesis. This Bifidobacterium adolescentis (strain ATCC 15703 / DSM 20083 / NCTC 11814 / E194a) protein is Adenine phosphoribosyltransferase.